Consider the following 232-residue polypeptide: 7-cyano-7-deazaguanine synthase (232 aa).

8–18 contacts ATP; the sequence is FSGGQDSTTCL. Zn(2+) contacts are provided by Cys-189, Cys-198, Cys-201, and Cys-204.

The protein belongs to the QueC family. Zn(2+) serves as cofactor.

The catalysed reaction is 7-carboxy-7-deazaguanine + NH4(+) + ATP = 7-cyano-7-deazaguanine + ADP + phosphate + H2O + H(+). The protein operates within purine metabolism; 7-cyano-7-deazaguanine biosynthesis. Functionally, catalyzes the ATP-dependent conversion of 7-carboxy-7-deazaguanine (CDG) to 7-cyano-7-deazaguanine (preQ(0)). This Yersinia enterocolitica serotype O:8 / biotype 1B (strain NCTC 13174 / 8081) protein is 7-cyano-7-deazaguanine synthase.